We begin with the raw amino-acid sequence, 275 residues long: Lysosome-associated membrane glycoprotein 5 (275 aa).

The first 18 residues, 1-18, serve as a signal peptide directing secretion; it reads MEFQLLLLCSVWALGVCA. Residues 19-228 are Extracellular-facing; sequence EQEVENLSGL…VTDQREQLEQ (210 aa). N-linked (GlcNAc...) asparagine glycosylation is found at Asn-24 and Asn-42. A helical membrane pass occupies residues 229 to 249; that stretch reads TLPLVLGLILGLIIVITISVY. Residues 250-275 lie on the Cytoplasmic side of the membrane; the sequence is HFHLKLNAAHTQQPTLPRDRSLYKNM.

Belongs to the LAMP family. Glycosylated.

It localises to the cytoplasmic vesicle membrane. The protein localises to the cell membrane. It is found in the cell projection. The protein resides in the dendrite. Its subcellular location is the cytoplasmic vesicle. It localises to the secretory vesicle. The protein localises to the synaptic vesicle membrane. It is found in the growth cone membrane. The protein resides in the early endosome membrane. Its subcellular location is the recycling endosome. It localises to the endoplasmic reticulum-Golgi intermediate compartment membrane. The protein localises to the endosome membrane. Functionally, plays a role in short-term synaptic plasticity in a subset of GABAergic neurons in the brain. The protein is Lysosome-associated membrane glycoprotein 5 (lamp5) of Danio rerio (Zebrafish).